The primary structure comprises 877 residues: Probable sulfate permease C3H7.02 (877 aa).

The next 13 helical transmembrane spans lie at 133–153 (WLVYDFIAGITVGCVVVPQGM), 161–181 (LPAQYGLYSSFVGVAIYCIFA), 186–206 (VSIGPVAVMSLVTSKVIANVQ), 221–241 (LALLAGAITCGLGLLRLGFII), 243–263 (FIPVPAVAGFTTGSALNIMAG), 292–312 (LPHTKVDAAFGLVSLFILYLV), 329–349 (VFFLTNVLRSAVIIIVGTAIS), 384–404 (LCADLASELPVSVIVLLLEHI), 424–444 (LIAMGATNLIGVFFHAYPATG), 461–481 (LGGIFTAGVVVLALYCLTGAF), 484–504 (IPNAVLSAVIIHSVFDLIIPW), 518–538 (ALIFICAVFVSVFSSIENGIY), and 543–563 (LSAALLLFRIAKPSGSFLGIL). The STAS domain maps to 594 to 747 (NLTVRDPPAG…SRSIEVGSAA (154 aa)). 2 disordered regions span residues 643–663 (KASDRPWNDPAPRKKKNAPEV) and 793–821 (ADSDTISVSDDKDKKVEGHRPSQDPTFSH). Residues 801 to 821 (SDDKDKKVEGHRPSQDPTFSH) show a composition bias toward basic and acidic residues.

The protein belongs to the SLC26A/SulP transporter (TC 2.A.53) family.

It is found in the membrane. Functionally, high affinity uptake of sulfate into the cell. The sequence is that of Probable sulfate permease C3H7.02 from Schizosaccharomyces pombe (strain 972 / ATCC 24843) (Fission yeast).